The following is a 629-amino-acid chain: Chaperone protein HtpG (629 aa).

The a; substrate-binding stretch occupies residues 1 to 335 (MSSNPTSSVR…TEDLPLNVSR (335 aa)). The b stretch occupies residues 336 to 547 (ELVQASPVMA…KDALDSQFEK (212 aa)). The segment at 548 to 629 (MMKMMNKDAD…NELVEAATRS (82 aa)) is c.

It belongs to the heat shock protein 90 family. Homodimer.

Its subcellular location is the cytoplasm. Functionally, molecular chaperone. Has ATPase activity. This Chlorobaculum tepidum (strain ATCC 49652 / DSM 12025 / NBRC 103806 / TLS) (Chlorobium tepidum) protein is Chaperone protein HtpG.